The primary structure comprises 682 residues: Glutamine--fructose-6-phosphate aminotransferase [isomerizing] 2 (682 aa).

Cys2 acts as the For GATase activity in catalysis. Residues 2 to 288 (CGIFAYMNYR…DDDIAAVADG (287 aa)) form the Glutamine amidotransferase type-2 domain. A Phosphoserine modification is found at Ser244. SIS domains follow at residues 360-499 (HLKE…DRIS) and 531-672 (LALE…VDFP). Residues 377-378 (TS), 422-424 (SQS), Thr427, and His578 each bind substrate.

Highest levels of expression in heart, placenta, and spinal cord.

It carries out the reaction D-fructose 6-phosphate + L-glutamine = D-glucosamine 6-phosphate + L-glutamate. It participates in nucleotide-sugar biosynthesis; UDP-N-acetyl-alpha-D-glucosamine biosynthesis; alpha-D-glucosamine 6-phosphate from D-fructose 6-phosphate: step 1/1. Controls the flux of glucose into the hexosamine pathway. Most likely involved in regulating the availability of precursors for N- and O-linked glycosylation of proteins. The sequence is that of Glutamine--fructose-6-phosphate aminotransferase [isomerizing] 2 (GFPT2) from Homo sapiens (Human).